The primary structure comprises 382 residues: Aminotransferase FGSG_00049 (382 aa).

Arg80 contributes to the pyridoxal 5'-phosphate binding site. N6-(pyridoxal phosphate)lysine is present on Lys181. Glu217 contributes to the pyridoxal 5'-phosphate binding site.

Belongs to the class-IV pyridoxal-phosphate-dependent aminotransferase family. Requires pyridoxal 5'-phosphate as cofactor.

It functions in the pathway mycotoxin biosynthesis. Aminotransferase; part of the gene cluster that mediates the biosynthesis of gramillins A and B, bicyclic lipopeptides that induce cell death in maize leaves but not in wheat leaves. The nonribosomal peptide synthetase GRA1 incorporates respectively a glutamic adic (Glu), a leucine (Leu), a serine (Ser), a hydroxyglutamine (HOGln), a 2-amino decanoic acid, and 2 cysteins (CysB and CysA). The biosynthesis of 2-amino decanoic acid incorporated in gramillins could be initiated by a fatty acid synthase composed of the alpha and beta subunits FGSG_00036 and FGSG_11656. The cytochrome P450 monooxygenase FGSG_15680 could hydroxylate the fatty acid chain. Subsequent oxidation to the ketone by the oxidoreductase FGSG_00048 and transamination by aminotransferase FGSG_00049 could form 2-amino-decanoic acid. On the other hand, FGSG_15680 could also be responsible for the HO-modified glutamine at the gamma-position. Whether hydroxylation occurs on the fully assembled product or on the Gln residue prior to assembly into the gramillins requires further proof. The thioredoxin FGSG_00043 could also be required for the disulfide-bond formation between CysA and CysB. The specific involvement of the remaining proteins from the cluster is more difficult to discern, but could have broader regulatory (FGSG_00040 and FGSG_11657) or enzymatic functions (FGSG_00044 and FGSG_00045). The final C-domain of GRA1 does not possess the expected sequence of a termination CT domain, often implicated in macrocyclization and release of a cyclopeptidein fungal NRPs; and the thioesterase FGSG_00047 may act in concert with the terminal C-domain of GRA1 to catalyze the formation of the macrocyclic anhydride and release of the products. This is Aminotransferase FGSG_00049 from Gibberella zeae (strain ATCC MYA-4620 / CBS 123657 / FGSC 9075 / NRRL 31084 / PH-1) (Wheat head blight fungus).